The primary structure comprises 116 residues: Guanylin (116 aa).

The N-terminal stretch at 1-23 (MNACVLSVLCLLGALAVLVEGVT) is a signal peptide. Residues 24–101 (VQDGDLSFPL…LQRLEAIAQD (78 aa)) constitute a propeptide that is removed on maturation. 3 disulfide bridges follow: cysteine 69–cysteine 83, cysteine 105–cysteine 113, and cysteine 108–cysteine 116.

The protein belongs to the guanylin family. Localized in both crypts and villi in the small intestine and to superficial epithelial cells in the colon.

Its subcellular location is the secreted. In terms of biological role, endogenous activator of intestinal guanylate cyclase. It stimulates this enzyme through the same receptor binding region as the heat-stable enterotoxins. This is Guanylin (Guca2a) from Mus musculus (Mouse).